A 144-amino-acid polypeptide reads, in one-letter code: Large ribosomal subunit protein uL16 (144 aa).

Residues 1-14 (MLMPKRVKYRKPHR) show a composition bias toward basic residues. A disordered region spans residues 1 to 25 (MLMPKRVKYRKPHRPGTQGKATRGN).

The protein belongs to the universal ribosomal protein uL16 family. Part of the 50S ribosomal subunit.

Binds 23S rRNA and is also seen to make contacts with the A and possibly P site tRNAs. This Moorella thermoacetica (strain ATCC 39073 / JCM 9320) protein is Large ribosomal subunit protein uL16.